Consider the following 84-residue polypeptide: MTDKIRTLQGRVVSDKMEKSIVVAIERIVKHPIYGKFIKRTTKLHVHDENNECGIGDVVEIHECRPLSKTKSWTLVRVVEKAVL.

Belongs to the universal ribosomal protein uS17 family. Part of the 30S ribosomal subunit.

One of the primary rRNA binding proteins, it binds specifically to the 5'-end of 16S ribosomal RNA. This is Small ribosomal subunit protein uS17 from Enterobacter sp. (strain 638).